The primary structure comprises 113 residues: Cell cycle protein GpsB (113 aa).

A coiled-coil region spans residues 32–71; it reads LDNVIKDYESFTKDNQQLSDENERLRAKVDELTKQVAVGA.

The protein belongs to the GpsB family. Forms polymers through the coiled coil domains. Interacts with PBP1, MreC and EzrA.

It is found in the cytoplasm. Its function is as follows. Divisome component that associates with the complex late in its assembly, after the Z-ring is formed, and is dependent on DivIC and PBP2B for its recruitment to the divisome. Together with EzrA, is a key component of the system that regulates PBP1 localization during cell cycle progression. Its main role could be the removal of PBP1 from the cell pole after pole maturation is completed. Also contributes to the recruitment of PBP1 to the division complex. Not essential for septum formation. The chain is Cell cycle protein GpsB from Lactiplantibacillus plantarum (strain ATCC BAA-793 / NCIMB 8826 / WCFS1) (Lactobacillus plantarum).